The sequence spans 113 residues: Carboxysome shell protein CcmK1 (113 aa).

Residues 4 to 90 (AVGMIETLGF…PHENLEYVLP (87 aa)) form the BMC domain.

It belongs to the bacterial microcompartments protein family. CcmK subfamily. As to quaternary structure, homohexamer. Interacts preferentially with CcmK2 and CcmK4a rather than itself in vitro.

It localises to the carboxysome. In terms of biological role, one of the shell proteins of the carboxysome, a polyhedral inclusion where RuBisCO (ribulose bisphosphate carboxylase, rbcL-rbcS) is sequestered. Assembles into hexamers which make sheets that form the facets of the polyhedral carboxysome. The hexamer central pore probably regulates metabolite flux. The protein is Carboxysome shell protein CcmK1 of Thermosynechococcus vestitus (strain NIES-2133 / IAM M-273 / BP-1).